A 294-amino-acid chain; its full sequence is Holothin acyltransferase (294 aa).

In terms of domain architecture, N-acetyltransferase spans 17–146 (WTSKPASLEE…SRLVGIHNQQ (130 aa)).

It carries out the reaction marinoloyl-CoA C + holothin = thiomarinol C + CoA. It catalyses the reaction pseudomonoyl-CoA C + holothin = pseudomonic acid C--holothin + CoA. It functions in the pathway antibiotic biosynthesis. Acyltransferase that catalyzes the formation of pseudomonic acid C-holothin (PAC-holothin), a thiomarinol analog, from pseudomonoyl-CoA C (PAC-CoA) and holothin. Accepts linear CoA substrates of different lengths, including propionyl-, hexanoyl-, octanoyl-, oleoyl- and dodecanoyl-CoA, readily converting all into the corresponding acyl-holothin adducts. In vivo, is probably involved in the biosynthesis of thiomarinol, a naturally occurring double-headed antibiotic. The polypeptide is Holothin acyltransferase (Pseudoalteromonas sp. (strain SANK 73390)).